Reading from the N-terminus, the 737-residue chain is LIMR family protein R05D3.2 (737 aa).

A compositionally biased stretch (acidic residues) spans 280-293; that stretch reads ADIEEENSEQSEDV. Positions 280-416 are disordered; that stretch reads ADIEEENSEQ…PKKPKNPNFD (137 aa). Residues 303–318 show a composition bias toward basic and acidic residues; that stretch reads ETIHQVDRSDTPHLED.

The protein belongs to the LIMR family.

This is LIMR family protein R05D3.2 from Caenorhabditis elegans.